A 263-amino-acid polypeptide reads, in one-letter code: UDP-N-acetylenolpyruvoylglucosamine reductase (263 aa).

R146 is a catalytic residue. S188 serves as the catalytic Proton donor. Residue E258 is part of the active site.

The protein belongs to the MurB family. Requires FAD as cofactor.

The protein localises to the cytoplasm. It carries out the reaction UDP-N-acetyl-alpha-D-muramate + NADP(+) = UDP-N-acetyl-3-O-(1-carboxyvinyl)-alpha-D-glucosamine + NADPH + H(+). The protein operates within cell wall biogenesis; peptidoglycan biosynthesis. Cell wall formation. The sequence is that of UDP-N-acetylenolpyruvoylglucosamine reductase from Helicobacter hepaticus (strain ATCC 51449 / 3B1).